A 437-amino-acid chain; its full sequence is Elongation factor 1-gamma (437 aa).

Ala-2 is subject to N-acetylalanine. In terms of domain architecture, GST N-terminal spans 2–87; that stretch reads AAGTLYTYPE…YVSNEELRGS (86 aa). The GST C-terminal domain maps to 88–216; sequence TPEAAAQVVQ…VKLCEKMAQF (129 aa). An N6-acetyllysine mark is found at Lys-147 and Lys-212. Residues 221–254 show a composition bias toward basic and acidic residues; that stretch reads FAETQPKKDTPRKEKGSREEKQKPQAERKEEKKA. A disordered region spans residues 221–268; sequence FAETQPKKDTPRKEKGSREEKQKPQAERKEEKKAAAPAPEEEMDECEQ. A Glycyl lysine isopeptide (Lys-Gly) (interchain with G-Cter in SUMO1) cross-link involves residue Lys-253. The EF-1-gamma C-terminal domain maps to 276–437; that stretch reads AKDPFAHLPK…KAFNQGKIFK (162 aa). A Glycyl lysine isopeptide (Lys-Gly) (interchain with G-Cter in SUMO2) cross-link involves residue Lys-285. An N6-acetyllysine modification is found at Lys-401. Position 434 is an N6-acetyllysine; alternate (Lys-434). Lys-434 is subject to N6-malonyllysine; alternate.

In terms of assembly, EF-1 is composed of four subunits: alpha, beta, delta, and gamma. Highly expressed in pancreatic tumor tissue and to a lesser extent in normal kidney, intestine, pancreas, stomach, lung, brain, spleen and liver.

In terms of biological role, probably plays a role in anchoring the complex to other cellular components. This chain is Elongation factor 1-gamma (EEF1G), found in Homo sapiens (Human).